Here is a 63-residue protein sequence, read N- to C-terminus: Large ribosomal subunit protein uL29 (63 aa).

This sequence belongs to the universal ribosomal protein uL29 family.

In Stutzerimonas stutzeri (strain A1501) (Pseudomonas stutzeri), this protein is Large ribosomal subunit protein uL29.